The following is a 283-amino-acid chain: Non-selective voltage-gated ion channel VDAC3 (283 aa).

An N-acetylcysteine modification is found at Cys-2. The residue at position 4 (Thr-4) is a Phosphothreonine. N6-acetyllysine occurs at positions 12, 15, and 20. 2 consecutive transmembrane segments (beta stranded) span residues 26–35 and 39–47; these read MVKIDLRTKS and VEFSTSGHA. Lys-53 participates in a covalent cross-link: Glycyl lysine isopeptide (Lys-Gly) (interchain with G-Cter in ubiquitin). Beta stranded transmembrane passes span 54 to 64, 69 to 76, and 80 to 89; these read ASGNLETKYKI, LTFTQKWN, and TLGTEISWEN. Lys-90 is subject to N6-acetyllysine. A beta stranded membrane pass occupies residues 95–104; sequence LKLTLDTIFV. Residues Lys-109 and Lys-110 each participate in a glycyl lysine isopeptide (Lys-Gly) (interchain with G-Cter in ubiquitin) cross-link. The next 10 membrane-spanning stretches (beta stranded) occupy residues 111–120, 123–130, 137–145, 150–158, 163–175, 178–185, 189–198, 202–211, 218–227, and 231–238; these read SGKLKASYKR, FSLGSNVD, TIYGWAVLA, LAGYQMSFD, KLSQNNFALGYKA, FQLHTHVN, EFGGSIYQKV, IETSINLAWT, RFGIAAKYKL, and TSLSAKVN. A Phosphoserine modification is found at Ser-241. NAD(+)-binding positions include 242–244 and 260–264; these read LIG and SALID. 2 consecutive transmembrane segments (beta stranded) span residues 242–251 and 254–263; these read LIGLGYTQTL and GVKLTLSALI. Lys-266 is modified (N6-acetyllysine; alternate). Residue Lys-266 forms a Glycyl lysine isopeptide (Lys-Gly) (interchain with G-Cter in ubiquitin); alternate linkage. A beta stranded transmembrane segment spans residues 273–282; the sequence is HKVGLGFELE.

It belongs to the eukaryotic mitochondrial porin family. In terms of assembly, interacts with ARMC12 in a TBC1D21-dependent manner. Interacts with MISFA. In terms of processing, ubiquitinated by PRKN during mitophagy, leading to its degradation and enhancement of mitophagy. Deubiquitinated by USP30.

It is found in the mitochondrion outer membrane. The protein resides in the membrane. It catalyses the reaction chloride(in) = chloride(out). The enzyme catalyses K(+)(in) = K(+)(out). In terms of biological role, non-selective voltage-gated ion channel that mediates the transport of anions and cations through the mitochondrion outer membrane and plasma membrane. Forms a high-conducting channel with a stable open state and a voltage-induced closure with a mild preference for anions over cations. Involved in male fertility and sperm mitochondrial sheath formation. In Bos taurus (Bovine), this protein is Non-selective voltage-gated ion channel VDAC3.